A 146-amino-acid polypeptide reads, in one-letter code: Deoxyuridine 5'-triphosphate nucleotidohydrolase (146 aa).

Substrate contacts are provided by residues 65–67 (RSG), N78, 82–84 (LID), and M92.

This sequence belongs to the dUTPase family. Mg(2+) is required as a cofactor.

It carries out the reaction dUTP + H2O = dUMP + diphosphate + H(+). It participates in pyrimidine metabolism; dUMP biosynthesis; dUMP from dCTP (dUTP route): step 2/2. This enzyme is involved in nucleotide metabolism: it produces dUMP, the immediate precursor of thymidine nucleotides and it decreases the intracellular concentration of dUTP so that uracil cannot be incorporated into DNA. This is Deoxyuridine 5'-triphosphate nucleotidohydrolase from Thiobacillus denitrificans (strain ATCC 25259 / T1).